A 1272-amino-acid chain; its full sequence is AF4/FMR2 family member 2 (1272 aa).

Disordered regions lie at residues 93–183 (IPKN…LTQD), 201–225 (QIGE…GEDA), and 283–302 (AYVR…PTLK). Over residues 97 to 107 (SVPQNPNNKNE) the composition is skewed to polar residues. Residues 151-160 (SKPEWSRDSH) show a composition bias toward basic and acidic residues. Positions 161-183 (NPSTVLASQASGQPNKMQTLTQD) are enriched in polar residues. Ser-391 bears the Phosphoserine mark. 4 disordered regions span residues 418–491 (KAKP…KWQL), 535–687 (TNAS…DQEE), 779–829 (SLHA…PEKK), and 842–903 (PPCI…QDKN). Pro residues predominate over residues 426–438 (VNPPLATPQPPPA). Residues 439-452 (VQASGGSGSSSESE) show a composition bias toward low complexity. Thr-478 carries the phosphothreonine modification. A compositionally biased stretch (basic and acidic residues) spans 543–558 (EPKERPLLSLIREKAR). The span at 576-586 (STTSETVSQRT) shows a compositional bias: polar residues. Residues 616-629 (PKEKESVELHDPPR) are compositionally biased toward basic and acidic residues. The span at 630–640 (GRNKATAHKPA) shows a compositional bias: basic residues. Residues 818 to 829 (PTEVAEKIPEKK) show a composition bias toward basic and acidic residues. Composition is skewed to pro residues over residues 844–853 (CISPAPPHKP) and 874–883 (FPPPLSPLPE).

Belongs to the AF4 family.

It localises to the nucleus speckle. RNA-binding protein. Might be involved in alternative splicing regulation through an interaction with G-quartet RNA structure. The chain is AF4/FMR2 family member 2 (AFF2) from Pan troglodytes (Chimpanzee).